We begin with the raw amino-acid sequence, 749 residues long: Poly(U)-binding-splicing factor rnp-6 (749 aa).

2 consecutive RRM domains span residues 102 to 176 (SRIY…LKVN) and 207 to 285 (FRVY…KCVT). 2 disordered regions span residues 323 to 388 (AGSS…PDVV) and 457 to 480 (IEEE…KMKR). Residues 330-354 (PSESGGSRAASPAPRAQSPATPSSS) are compositionally biased toward low complexity. Residues 658-739 (NVIVLRNMVT…NTVKAEAYDQ (82 aa)) form the RRM 3; atypical domain.

It belongs to the RRM half pint family.

The protein resides in the nucleus. DNA- and RNA-binding protein, involved in several nuclear processes such as pre-mRNA splicing, apoptosis and transcription regulation. Ensures the correct splicing of genes involved in immunity to promote longevity in response to infection by pathogenic bacteria such as S.aureus. This is Poly(U)-binding-splicing factor rnp-6 from Caenorhabditis elegans.